The primary structure comprises 189 residues: Elongation factor P (189 aa).

Position 34 is an N6-(3,6-diaminohexanoyl)-5-hydroxylysine (Lys-34).

Belongs to the elongation factor P family. Post-translationally, may be beta-lysylated on the epsilon-amino group of Lys-34 by the combined action of EpmA and EpmB, and then hydroxylated on the C5 position of the same residue by EpmC (if this protein is present). Lysylation is critical for the stimulatory effect of EF-P on peptide-bond formation. The lysylation moiety may extend toward the peptidyltransferase center and stabilize the terminal 3-CCA end of the tRNA. Hydroxylation of the C5 position on Lys-34 may allow additional potential stabilizing hydrogen-bond interactions with the P-tRNA.

Its subcellular location is the cytoplasm. The protein operates within protein biosynthesis; polypeptide chain elongation. Its function is as follows. Involved in peptide bond synthesis. Alleviates ribosome stalling that occurs when 3 or more consecutive Pro residues or the sequence PPG is present in a protein, possibly by augmenting the peptidyl transferase activity of the ribosome. Modification of Lys-34 is required for alleviation. The protein is Elongation factor P of Buchnera aphidicola subsp. Acyrthosiphon pisum (strain APS) (Acyrthosiphon pisum symbiotic bacterium).